The primary structure comprises 141 residues: Putative pre-16S rRNA nuclease (141 aa).

Belongs to the YqgF nuclease family.

It is found in the cytoplasm. Its function is as follows. Could be a nuclease involved in processing of the 5'-end of pre-16S rRNA. The protein is Putative pre-16S rRNA nuclease of Chlorobium luteolum (strain DSM 273 / BCRC 81028 / 2530) (Pelodictyon luteolum).